We begin with the raw amino-acid sequence, 490 residues long: Sulfate adenylyltransferase (490 aa).

Residues M1–F165 are N-terminal. A catalytic region spans residues D166–S390. Residue Q193 participates in sulfate binding. ATP-binding positions include Q193 to N196 and G287 to H290. Residues T194, R195, and N196 contribute to the active site. R195 contacts sulfate. Residue A291 coordinates sulfate. Residue M329 participates in ATP binding. T356 bears the Phosphothreonine mark. The segment at Q391–L490 is required for oligomerization; adenylyl-sulfate kinase-like.

The protein belongs to the sulfate adenylyltransferase family. Homohexamer. Dimer of trimers.

The protein localises to the cytoplasm. The enzyme catalyses sulfate + ATP + H(+) = adenosine 5'-phosphosulfate + diphosphate. The protein operates within sulfur metabolism; hydrogen sulfide biosynthesis; sulfite from sulfate: step 1/3. In terms of biological role, catalyzes the first intracellular reaction of sulfate assimilation, forming adenosine-5'-phosphosulfate (APS) from inorganic sulfate and ATP. Plays an important role in sulfate activation as a component of the biosynthesis pathway of sulfur-containing amino acids. In Schizosaccharomyces pombe (strain 972 / ATCC 24843) (Fission yeast), this protein is Sulfate adenylyltransferase (sua1).